Here is a 73-residue protein sequence, read N- to C-terminus: Conotoxin CnIIIG (73 aa).

A signal peptide spans 1–19; it reads MSKLGVLLTICLLLLPLTA. Positions 20–48 are excised as a propeptide; sequence LPMDEDQPADQPADRMQDDISSEQYPLFD. Q51 is subject to Pyrrolidone carboxylic acid. Disulfide bonds link C53–C72, C54–C70, and C60–C73.

It belongs to the conotoxin M superfamily. Expressed by the venom duct.

Its subcellular location is the secreted. Functionally, shows a paralytic effect in fish. The sequence is that of Conotoxin CnIIIG from Conus consors (Singed cone).